A 101-amino-acid chain; its full sequence is MAKLALIEREKKRAKLVAKYADKRANLKAIIDDQEKSEEERYLARLELQKLPRNANPTRQRNRCAITGRPRGTFRKFGLARNKIREIAFKGEIPGLTKASW.

Belongs to the universal ribosomal protein uS14 family. Part of the 30S ribosomal subunit. Contacts proteins S3 and S10.

Its function is as follows. Binds 16S rRNA, required for the assembly of 30S particles and may also be responsible for determining the conformation of the 16S rRNA at the A site. The protein is Small ribosomal subunit protein uS14 of Cupriavidus metallidurans (strain ATCC 43123 / DSM 2839 / NBRC 102507 / CH34) (Ralstonia metallidurans).